The sequence spans 397 residues: MRVIGLMSGTSYDAIDAAAADIRIDGDTLVLTPLGMVSEPYSGELRAAVAAAVPPASTTVGQICQLDTEIGQAFAAVAARANAELCGGSAELISSHGQTMFHWVEGAQVKGTLQLGQPAWIAEKTGCTVVSDLRSRDVATGGQGAPLVSAFDVLWLNGRTSGSVALNLGGIANVTAPGGGGTTADGPAVPIAFDTGPANALIDAAVSEFTAGEQWFDLGGALGAAGTPNVDLLAHLLSEPYYTQPAPKSTGKELFHRDYLLAALRGYESLSLADIVATLTALTARTVADSVKALAATEVVVSGGGTKNPTLMAMLRDELGDIALVSSDELGVTSDIKEALAFAVLGFLTAHGLPGSIASCTGARHASVLGSLTPGSRGLPRITSVPSAPKTMRIEAL.

9–16 (GTSYDAID) lines the ATP pocket.

Belongs to the anhydro-N-acetylmuramic acid kinase family.

The catalysed reaction is 1,6-anhydro-N-acetyl-beta-muramate + ATP + H2O = N-acetyl-D-muramate 6-phosphate + ADP + H(+). It functions in the pathway amino-sugar metabolism; 1,6-anhydro-N-acetylmuramate degradation. Its pathway is cell wall biogenesis; peptidoglycan recycling. Its function is as follows. Catalyzes the specific phosphorylation of 1,6-anhydro-N-acetylmuramic acid (anhMurNAc) with the simultaneous cleavage of the 1,6-anhydro ring, generating MurNAc-6-P. Is required for the utilization of anhMurNAc either imported from the medium or derived from its own cell wall murein, and thus plays a role in cell wall recycling. In Rhodococcus erythropolis (strain PR4 / NBRC 100887), this protein is Anhydro-N-acetylmuramic acid kinase.